A 166-amino-acid chain; its full sequence is Protein BioX (166 aa).

The next 5 membrane-spanning stretches (helical) occupy residues 12 to 32 (ISLL…TGIP), 33 to 53 (GSEF…FGFK), 55 to 75 (YFLA…HSIL), 87 to 107 (VGLI…AGPI), and 117 to 137 (AFTL…GMVI).

The protein resides in the cell membrane. Its function is as follows. Does not seem to be a permease of pimelate. Its role in biotin synthesis is not clear. The protein is Protein BioX (bioX) of Lysinibacillus sphaericus (Bacillus sphaericus).